A 452-amino-acid chain; its full sequence is Methionine aminopeptidase 2-1 (452 aa).

The disordered stretch occupies residues 1-100; the sequence is MAAKVADDVA…VRIDEVFPND (100 aa). Over residues 37–51 the composition is skewed to acidic residues; sequence EHDDSDDDNEAEDGA. A compositionally biased stretch (basic residues) spans 60-73; the sequence is KKKKKRKPRKKKKA. His205 serves as a coordination point for substrate. A divalent metal cation-binding residues include Asp225, Asp236, and His305. His313 provides a ligand contact to substrate. A divalent metal cation is bound by residues Glu338 and Glu433.

This sequence belongs to the peptidase M24A family. Methionine aminopeptidase eukaryotic type 2 subfamily. Co(2+) serves as cofactor. Zn(2+) is required as a cofactor. The cofactor is Mn(2+). Requires Fe(2+) as cofactor.

The protein localises to the cytoplasm. The catalysed reaction is Release of N-terminal amino acids, preferentially methionine, from peptides and arylamides.. Functionally, cotranslationally removes the N-terminal methionine from nascent proteins. The N-terminal methionine is often cleaved when the second residue in the primary sequence is small and uncharged (Met-Ala-, Cys, Gly, Pro, Ser, Thr, or Val). This chain is Methionine aminopeptidase 2-1, found in Pyrenophora teres f. teres (strain 0-1) (Barley net blotch fungus).